The primary structure comprises 252 residues: Enolase-phosphatase E1 (252 aa).

2 residues coordinate Mg(2+): aspartate 14 and glutamate 16. Substrate-binding positions include 143-144 (SS) and lysine 177. Aspartate 202 is a binding site for Mg(2+).

It belongs to the HAD-like hydrolase superfamily. MasA/MtnC family. As to quaternary structure, monomer. The cofactor is Mg(2+).

It is found in the cytoplasm. The protein localises to the nucleus. The enzyme catalyses 5-methylsulfanyl-2,3-dioxopentyl phosphate + H2O = 1,2-dihydroxy-5-(methylsulfanyl)pent-1-en-3-one + phosphate. The protein operates within amino-acid biosynthesis; L-methionine biosynthesis via salvage pathway; L-methionine from S-methyl-5-thio-alpha-D-ribose 1-phosphate: step 3/6. Its pathway is amino-acid biosynthesis; L-methionine biosynthesis via salvage pathway; L-methionine from S-methyl-5-thio-alpha-D-ribose 1-phosphate: step 4/6. In terms of biological role, bifunctional enzyme that catalyzes the enolization of 2,3-diketo-5-methylthiopentyl-1-phosphate (DK-MTP-1-P) into the intermediate 2-hydroxy-3-keto-5-methylthiopentenyl-1-phosphate (HK-MTPenyl-1-P), which is then dephosphorylated to form the acireductone 1,2-dihydroxy-3-keto-5-methylthiopentene (DHK-MTPene). This is Enolase-phosphatase E1 from Drosophila pseudoobscura pseudoobscura (Fruit fly).